Consider the following 183-residue polypeptide: uncharacterized protein (183 aa).

Residues 1–23 (MGSSFVIDRSSSSPAPPRGPAPK) are disordered.

This is an uncharacterized protein from Saccharomyces cerevisiae (strain ATCC 204508 / S288c) (Baker's yeast).